The sequence spans 791 residues: Probable phosphoketolase (791 aa).

It belongs to the XFP family. Thiamine diphosphate is required as a cofactor.

In Chlorobaculum tepidum (strain ATCC 49652 / DSM 12025 / NBRC 103806 / TLS) (Chlorobium tepidum), this protein is Probable phosphoketolase.